The following is a 339-amino-acid chain: MAMAKALLFAILGCLCLCSAVLAARELSDDAAMAARHERWMAQYGRVYRDDAEKARRFEVFKANVAFIESFNAGNHNFWLGVNQFADLTNDEFRWTKTNKGFIPSTTRVPTGFRYENVNIDALPATVDWRTKGAVTPIKDQGQCGCCWAFSAVAAMEGIVKLSTGKLISLSEQELVDCDVHGEDQGCEGGLMDDAFKFIIKNGGLTTESNYPYAAADDKCKSVSNSVASIKGYEDVPANNEAALMKAVANQPVSVAVDGGDMTFQFYKGGVMTGSCGTDLDHGIVAIGYGKASDGTKYWLLKNSWGTTWGENGFLRMEKDISDKRGMCGLAMEPSYPTA.

An N-terminal signal peptide occupies residues 1–23 (MAMAKALLFAILGCLCLCSAVLA). Cystine bridges form between cysteine 144-cysteine 187, cysteine 178-cysteine 220, and cysteine 276-cysteine 328. Cysteine 147 is an active-site residue. Catalysis depends on residues histidine 282 and asparagine 303.

The protein belongs to the peptidase C1 family.

The protein localises to the vacuole. Its function is as follows. Cysteine protease that may have a developmental senescence specific cell death function during apoptosis, heavy metal detoxification, and hypersensitive response. This chain is Senescence-specific cysteine protease SAG39, found in Oryza sativa subsp. indica (Rice).